Consider the following 265-residue polypeptide: MAQLPPKIPVAAPGHHQHWASAGGAGDAAWADEFAEFAASRRGAHRRSLSDSVAFVEVAPAGCGAGGEFDRLDDDQLMSMFPDEGGSSAPGSDNGGSDSDGGGDKHAAAQSDDGQHAAGEPTQEQAAATSPTELIRDPKRVKRILANRQSAQRSRVRKLQYISELERSVTTLQNEVSVLSPRVAFLDQQRTILTVGNSHLKQRIAALAQDKIFKDAHQEALRKEIERLRQVYQQQNTKLSGGLAADHAHVHGGPPPVRAEKELMS.

2 disordered regions span residues 1 to 24 (MAQL…SAGG) and 77 to 139 (LMSM…RDPK). A compositionally biased stretch (low complexity) spans 85–97 (GGSSAPGSDNGGS). The segment covering 122-132 (TQEQAAATSPT) has biased composition (polar residues). Residues 137-189 (DPKRVKRILANRQSAQRSRVRKLQYISELERSVTTLQNEVSVLSPRVAFLDQQ) enclose the bZIP domain. A basic motif region spans residues 139–158 (KRVKRILANRQSAQRSRVRK). Residues 165 to 186 (LERSVTTLQNEVSVLSPRVAFL) form a leucine-zipper region. The disordered stretch occupies residues 239–265 (LSGGLAADHAHVHGGPPPVRAEKELMS).

Expressed in roots, shoots and panicles.

Its subcellular location is the nucleus. Functionally, transcription regulator. The sequence is that of Basic leucine zipper 6 (BZIP06) from Oryza sativa subsp. japonica (Rice).